The following is a 488-amino-acid chain: Long chain base biosynthesis protein 2a (488 aa).

The chain crosses the membrane as a helical span at residues 4 to 24 (LPYTTALTTLFSYGLLFAFGQ). The residue at position 311 (Lys-311) is an N6-(pyridoxal phosphate)lysine.

The protein belongs to the class-II pyridoxal-phosphate-dependent aminotransferase family. Heterodimer with LCB1. Component of the serine palmitoyltransferase (SPT) complex, composed of LCB1 and LCB2. Pyridoxal 5'-phosphate serves as cofactor.

The protein localises to the endoplasmic reticulum membrane. It catalyses the reaction L-serine + hexadecanoyl-CoA + H(+) = 3-oxosphinganine + CO2 + CoA. It functions in the pathway lipid metabolism; sphingolipid metabolism. In terms of biological role, serine palmitoyltransferase (SPT). The heterodimer formed with LCB1 constitutes the catalytic core. The polypeptide is Long chain base biosynthesis protein 2a (Oryza sativa subsp. japonica (Rice)).